Reading from the N-terminus, the 67-residue chain is Medusin-S1 (67 aa).

The first 22 residues, 1-22, serve as a signal peptide directing secretion; sequence MSFLKKSLFLVLFLGFVSLSIC. The propeptide occupies 23–48; the sequence is EEEKRETEEKENEQEDDREERSEEKR. The disordered stretch occupies residues 26–47; sequence KRETEEKENEQEDDREERSEEK. Over residues 31-40 the composition is skewed to acidic residues; the sequence is EKENEQEDDR. L66 bears the Leucine amide mark.

Belongs to the frog skin active peptide (FSAP) family. Medusin subfamily. As to expression, expressed by the skin glands.

Its subcellular location is the secreted. The protein resides in the target cell membrane. Its function is as follows. Antibacterial peptide with moderate activity against the Gram-positive bacteria (S.aureus ATCC 25923, MIC=25 uM), but not against all other bacteria (both Gram-positive and Gram-negative) tested. Does not show activity against fungi, and against Leishmania species. It adopts an alpha-helical structure with very low amphipathicity in membrane environments. This Phyllomedusa sauvagei (Sauvage's leaf frog) protein is Medusin-S1.